The following is a 375-amino-acid chain: MSATPIGFFGLKLVPGKVHRMDVSRDFKITNVSYADQPKSNTKTLVKIHYTHVPGFEDDYDEEEQEKEPKSTDEEEEIEEKVYTLCSLNGANKDHAVVDLQFCQEELIGFSITGDAPVDLVGNYVAPPDFFDQDPSDSELYSDDEDDDEDMYGLDSDDFDDDDDDDMDEDPDRFEELVESSASKPKKAIEAAPLADSKKRAAEKPVKETAAKKLKADASAASAASTPTKAIETKGEKQTKGAKDTKPKSETVEKKTVDKSTSKMTTTKLPSGLVIEEKSAGSGPPCKAGQKVGMRYVGKLTNGKVFDQCTSGKPFYFKLGKGEVIKGWDEGVKGMRVGAERRLTCPPKLAYGNQKIPGIPANSTLVFDVKLVEIK.

Disordered regions lie at residues 55–78 (GFEDDYDEEEQEKEPKSTDEEEEI) and 127–265 (PPDF…SKMT). Acidic residues-rich tracts occupy residues 56-66 (FEDDYDEEEQE) and 131-173 (FDQD…DPDR). The span at 196 to 216 (DSKKRAAEKPVKETAAKKLKA) shows a compositional bias: basic and acidic residues. Positions 217–230 (DASAASAASTPTKA) are enriched in low complexity. Positions 231 to 261 (IETKGEKQTKGAKDTKPKSETVEKKTVDKST) are enriched in basic and acidic residues. The 87-residue stretch at 289–375 (GQKVGMRYVG…VFDVKLVEIK (87 aa)) folds into the PPIase FKBP-type domain.

It belongs to the FKBP-type PPIase family. FKBP3/4 subfamily. As to quaternary structure, binds to histones H3 and H4.

It localises to the nucleus. The enzyme catalyses [protein]-peptidylproline (omega=180) = [protein]-peptidylproline (omega=0). Its activity is regulated as follows. Inhibited by both FK506 and rapamycin. In terms of biological role, PPIase that acts as a histone chaperone. Histone proline isomerase that increases the rate of cis-trans isomerization at prolines on the histone H3 N-terminal tail. Proline isomerization influences H3 methylation thereby regulating gene expression. This is FK506-binding protein 4 (FPR4) from Mycosarcoma maydis (Corn smut fungus).